A 397-amino-acid polypeptide reads, in one-letter code: tRNA pseudouridine synthase D (397 aa).

Residue Asp76 is the Nucleophile of the active site. The 211-residue stretch at 151 to 361 folds into the TRUD domain; that stretch reads GVPNFFGEQR…MEGERRPLRV (211 aa).

Belongs to the pseudouridine synthase TruD family.

The catalysed reaction is uridine(13) in tRNA = pseudouridine(13) in tRNA. Functionally, responsible for synthesis of pseudouridine from uracil-13 in transfer RNAs. In Geotalea daltonii (strain DSM 22248 / JCM 15807 / FRC-32) (Geobacter daltonii), this protein is tRNA pseudouridine synthase D.